Consider the following 119-residue polypeptide: Ribonuclease P protein component (119 aa).

The protein belongs to the RnpA family. As to quaternary structure, consists of a catalytic RNA component (M1 or rnpB) and a protein subunit.

The enzyme catalyses Endonucleolytic cleavage of RNA, removing 5'-extranucleotides from tRNA precursor.. RNaseP catalyzes the removal of the 5'-leader sequence from pre-tRNA to produce the mature 5'-terminus. It can also cleave other RNA substrates such as 4.5S RNA. The protein component plays an auxiliary but essential role in vivo by binding to the 5'-leader sequence and broadening the substrate specificity of the ribozyme. The sequence is that of Ribonuclease P protein component from Beutenbergia cavernae (strain ATCC BAA-8 / DSM 12333 / CCUG 43141 / JCM 11478 / NBRC 16432 / NCIMB 13614 / HKI 0122).